The chain runs to 300 residues: Type 1 fimbrin D-mannose specific adhesin (300 aa).

A signal peptide spans 1 to 21 (MKRVITLFAVLLMGWSVNAWS).

The protein belongs to the fimbrial protein family.

It is found in the fimbrium. Functionally, involved in regulation of length and mediation of adhesion of type 1 fimbriae (but not necessary for the production of fimbriae). Adhesin responsible for the binding to D-mannose. It is laterally positioned at intervals in the structure of the type 1 fimbriae. In order to integrate FimH in the fimbriae FimF and FimG are needed. The protein is Type 1 fimbrin D-mannose specific adhesin (fimH) of Escherichia coli (strain K12).